The chain runs to 192 residues: Imidazoleglycerol-phosphate dehydratase (192 aa).

Belongs to the imidazoleglycerol-phosphate dehydratase family.

It localises to the cytoplasm. It catalyses the reaction D-erythro-1-(imidazol-4-yl)glycerol 3-phosphate = 3-(imidazol-4-yl)-2-oxopropyl phosphate + H2O. The protein operates within amino-acid biosynthesis; L-histidine biosynthesis; L-histidine from 5-phospho-alpha-D-ribose 1-diphosphate: step 6/9. The polypeptide is Imidazoleglycerol-phosphate dehydratase (Clostridioides difficile (strain 630) (Peptoclostridium difficile)).